We begin with the raw amino-acid sequence, 547 residues long: CTP synthase (547 aa).

The interval 1-265 is amidoligase domain; the sequence is MARYVFITGG…DQAVLDAFGI (265 aa). S13 is a binding site for CTP. A UTP-binding site is contributed by S13. ATP-binding positions include 14–19 and D71; that span reads SLGKGL. Mg(2+) is bound by residues D71 and E139. Residues 146 to 148, 186 to 191, and K222 each bind CTP; these read DIE and KTKPTQ. UTP is bound by residues 186-191 and K222; that span reads KTKPTQ. A Glutamine amidotransferase type-1 domain is found at 291 to 546; it reads RVAIVGKYTQ…IRAAVEVSRL (256 aa). G353 provides a ligand contact to L-glutamine. The active-site Nucleophile; for glutamine hydrolysis is C380. Residues 381–384, E404, and R474 contribute to the L-glutamine site; that span reads LGMQ. Catalysis depends on residues H519 and E521.

This sequence belongs to the CTP synthase family. Homotetramer.

It carries out the reaction UTP + L-glutamine + ATP + H2O = CTP + L-glutamate + ADP + phosphate + 2 H(+). The enzyme catalyses L-glutamine + H2O = L-glutamate + NH4(+). The catalysed reaction is UTP + NH4(+) + ATP = CTP + ADP + phosphate + 2 H(+). Its pathway is pyrimidine metabolism; CTP biosynthesis via de novo pathway; CTP from UDP: step 2/2. Allosterically activated by GTP, when glutamine is the substrate; GTP has no effect on the reaction when ammonia is the substrate. The allosteric effector GTP functions by stabilizing the protein conformation that binds the tetrahedral intermediate(s) formed during glutamine hydrolysis. Inhibited by the product CTP, via allosteric rather than competitive inhibition. Functionally, catalyzes the ATP-dependent amination of UTP to CTP with either L-glutamine or ammonia as the source of nitrogen. Regulates intracellular CTP levels through interactions with the four ribonucleotide triphosphates. The polypeptide is CTP synthase (Cereibacter sphaeroides (strain ATCC 17025 / ATH 2.4.3) (Rhodobacter sphaeroides)).